A 312-amino-acid polypeptide reads, in one-letter code: Malate dehydrogenase (312 aa).

Residues 7–13 (GASGGIG) and D34 each bind NAD(+). Positions 81 and 87 each coordinate substrate. NAD(+) contacts are provided by residues N94 and 117 to 119 (ITN). Residues N119 and R153 each contribute to the substrate site. Residue H177 is the Proton acceptor of the active site. M227 contributes to the NAD(+) binding site.

The protein belongs to the LDH/MDH superfamily. MDH type 1 family. Homodimer.

It catalyses the reaction (S)-malate + NAD(+) = oxaloacetate + NADH + H(+). Catalyzes the reversible oxidation of malate to oxaloacetate. The chain is Malate dehydrogenase from Actinobacillus succinogenes (strain ATCC 55618 / DSM 22257 / CCUG 43843 / 130Z).